A 340-amino-acid polypeptide reads, in one-letter code: Mitochondrial glycine transporter (340 aa).

3 Solcar repeats span residues 23 to 108 (PKTL…ARNG), 128 to 218 (LSPF…FKND), and 237 to 325 (RSTI…LIKS). 6 helical membrane-spanning segments follow: residues 29-54 (LISGASAGLISAISLQPFDLLKTRLQ), 83-109 (GALPSTLRTSVGAGLYFTILSSARNGI), 134-159 (LATGFIVRAVVGIITMPITIVKTRYE), 193-216 (GSFATLARDCPYAGMYVLFYELFK), 241-267 (INTSAAILAASVSTTITAPFDAIKTRL), and 300-318 (GLSLRFGRKGLSSGISWCI).

It belongs to the mitochondrial carrier (TC 2.A.29) family. SLC25A38 subfamily.

The protein localises to the mitochondrion inner membrane. The catalysed reaction is glycine(in) = glycine(out). Mitochondrial glycine transporter that imports glycine into the mitochondrial matrix. Plays an important role in providing glycine for the first enzymatic step in heme biosynthesis, the condensation of glycine with succinyl-CoA to produce 5-aminolevulinate (ALA) in the mitochondrial matrix. In Debaryomyces hansenii (strain ATCC 36239 / CBS 767 / BCRC 21394 / JCM 1990 / NBRC 0083 / IGC 2968) (Yeast), this protein is Mitochondrial glycine transporter.